A 1217-amino-acid chain; its full sequence is Disease resistance protein RPS4 (1217 aa).

Residues proline 14–leucine 175 enclose the TIR domain. Glutamate 88 is an active-site residue. Positions glutamate 211–glutamate 472 constitute an NB-ARC domain. 11 LRR repeats span residues histidine 260–glutamate 285, proline 436–aspartate 459, leucine 614–proline 636, isoleucine 637–threonine 659, alanine 682–methionine 706, methionine 708–leucine 728, isoleucine 729–serine 749, aspartate 750–arginine 774, leucine 796–isoleucine 818, serine 819–tyrosine 842, and leucine 861–cysteine 887. Residues threonine 1162–threonine 1195 form a disordered region. A Nuclear localization signal motif is present at residues lysine 1170 to methionine 1177.

Interacts with EDS1.

It is found in the nucleus. The catalysed reaction is NAD(+) + H2O = ADP-D-ribose + nicotinamide + H(+). Its function is as follows. Disease resistance (R) protein that specifically recognizes the AvrRps4 type III effector avirulence protein from Pseudomonas syringae. Resistance proteins guard the plant against pathogens that contain an appropriate avirulence protein via an indirect interaction with this avirulence protein. That triggers a defense system including the hypersensitive response, which restricts the pathogen growth. The combined presence of both regular and alternative RPS4 transcripts with truncated open reading frames (ORFs) is necessary for function. RPS4 function is regulated at multiple levels, including gene expression, alternative splicing, and protein stability. Acts as a disease resistance protein involved in resistance to fungal and bacterial pathogens, including R.solanacearum, P.syringae pv. tomato and C.higginsianum. In presence of RRS1, elicites an EDS1-dependent hypersensitive response. This Arabidopsis thaliana (Mouse-ear cress) protein is Disease resistance protein RPS4.